A 128-amino-acid polypeptide reads, in one-letter code: MDTITNLITSIKNAYMVKKQTVRVNATRINENFGRILLQEGFIRNIREHKDGQKFFLIFTLKYRKRGEKIITLKRISRPGWRIYSDFPKIPKVLGGMGIVILFTSQGIMTDREARKKKIGGELLCFVW.

This sequence belongs to the universal ribosomal protein uS8 family. As to quaternary structure, part of the 30S ribosomal subunit.

The protein localises to the plastid. Its subcellular location is the chloroplast. One of the primary rRNA binding proteins, it binds directly to 16S rRNA central domain where it helps coordinate assembly of the platform of the 30S subunit. This is Small ribosomal subunit protein uS8c (rps8) from Gnetum parvifolium (Small-leaved jointfir).